The sequence spans 96 residues: Phosphoribosyl-ATP pyrophosphatase (96 aa).

It belongs to the PRA-PH family.

The protein localises to the cytoplasm. The enzyme catalyses 1-(5-phospho-beta-D-ribosyl)-ATP + H2O = 1-(5-phospho-beta-D-ribosyl)-5'-AMP + diphosphate + H(+). It functions in the pathway amino-acid biosynthesis; L-histidine biosynthesis; L-histidine from 5-phospho-alpha-D-ribose 1-diphosphate: step 2/9. The protein is Phosphoribosyl-ATP pyrophosphatase of Methanococcus maripaludis (strain C6 / ATCC BAA-1332).